The sequence spans 161 residues: Probable chemoreceptor glutamine deamidase CheD (161 aa).

The protein belongs to the CheD family.

The enzyme catalyses L-glutaminyl-[protein] + H2O = L-glutamyl-[protein] + NH4(+). Probably deamidates glutamine residues to glutamate on methyl-accepting chemotaxis receptors (MCPs), playing an important role in chemotaxis. The polypeptide is Probable chemoreceptor glutamine deamidase CheD (Trichlorobacter lovleyi (strain ATCC BAA-1151 / DSM 17278 / SZ) (Geobacter lovleyi)).